A 525-amino-acid chain; its full sequence is Sterol O-acyltransferase 2 (525 aa).

Disordered stretches follow at residues 1–34 and 77–97; these read MQPK…THGT and QDRP…ELHP. The Cytoplasmic segment spans residues 1–119; sequence MQPKVPQLRR…IDELMEVQHF (119 aa). Residues 9–23 show a composition bias toward basic and acidic residues; sequence RRREGLGEEQEKGAR. H118 contacts cholesterol. A helical transmembrane segment spans residues 120 to 141; that stretch reads RTIYHMFIAGLCVLIISTLAID. At 142 to 161 the chain is on the lumenal side; the sequence is FIDEGRLMLEFDLLLFSFGQ. A helical transmembrane segment spans residues 162–187; the sequence is LPLALMTWVPMFLSTLLVPYQTLWLW. The Cytoplasmic segment spans residues 188–199; the sequence is ARPRAGGAWMLG. Residues 200–223 traverse the membrane as a helical segment; sequence ASLGCVLLAAHAVVLCVLPVHVSV. At 224–231 the chain is on the lumenal side; the sequence is RHELPPAS. The chain crosses the membrane as a helical span at residues 232–255; it reads RCVLVFEQVRLLMKSYSFLRETVP. Over 256-296 the chain is Cytoplasmic; that stretch reads GIFCVRGGKGISPPSFSSYLYFLFCPTLIYRETYPRTPSIR. C280 bears the Cysteine sulfenic acid (-SOH); alternate mark. C280 is covalently cross-linked (Glycyl cysteine thioester (Cys-Gly) (interchain with G-Cter in ubiquitin); alternate). Residues 297-329 form a helical membrane-spanning segment; sequence WNYVAKNFAQVLGCLLYACFILGRLCVPVFANM. Residues 330-346 lie on the Lumenal side of the membrane; the sequence is SREPFSTRALLLSILHA. Residues 347–372 form a helical membrane-spanning segment; sequence TGPGIFMLLLIFFAFLHCWLNAFAEM. Over 373-420 the chain is Cytoplasmic; sequence LRFGDRMFYRDWWNSTSFSNYYRTWNVVVHDWLYSYVYQDGLWLLGRR. The FYXDWWN motif motif lies at 380–386; that stretch reads FYRDWWN. An acyl-CoA is bound by residues N392, R395, N398, H402, Y410, and S433. A helical membrane pass occupies residues 421-445; that stretch reads ARGVAMLGVFLVSAVVHEYIFCFVL. The active site involves H437. The Lumenal portion of the chain corresponds to 446 to 451; the sequence is GFFYPV. Residues 452-467 traverse the membrane as a helical segment; sequence MLMLFLVFGGLLNFTM. At 468–473 the chain is on the cytoplasmic side; it reads NDRHTG. Residues 474–505 traverse the membrane as a helical segment; that stretch reads PAWNILMWTFLFMGQGIQVSLYCQEWYARRHC. At 506 to 525 the chain is on the lumenal side; sequence PLPQTTFWGMVTPRSWSCHP.

Belongs to the membrane-bound acyltransferase family. Sterol o-acyltransferase subfamily. In terms of assembly, may form homo- or heterodimers. Interacts with INSIG1; the interaction is direct and promotes association with AMFR/gp78. Post-translationally, polyubiquitinated by AMFR/gp78 at Cys-280, leading to its degradation when the lipid levels are low. Association with AMFR/gp78 is mediated via interaction with INSIG1. High concentration of cholesterol and fatty acid results in Cys-280 oxidation, preventing ubiquitination at the same site, resulting in protein stabilization. Oxidized at Cys-280: high concentration of cholesterol and fatty acid induce reactive oxygen species, which oxidizes Cys-280, preventing ubiquitination at the same site, and resulting in protein stabilization.

The protein localises to the endoplasmic reticulum membrane. It carries out the reaction a sterol + a long-chain fatty acyl-CoA = a long-chain 3-hydroxysterol ester + CoA. It catalyses the reaction cholesterol + an acyl-CoA = a cholesterol ester + CoA. The catalysed reaction is cholesterol + (9Z)-octadecenoyl-CoA = cholesteryl (9Z-octadecenoate) + CoA. The enzyme catalyses (5Z,8Z,11Z,14Z,17Z)-eicosapentaenoyl-CoA + cholesterol = (5Z,8Z,11Z,14Z,17Z-eicosapentaenoyl)-cholesterol + CoA. It carries out the reaction (9Z,12Z,15Z)-octadecatrienoyl-CoA + cholesterol = (9Z,12Z,15Z-octadecatrienoyl)-cholesterol + CoA. It catalyses the reaction (5Z,8Z,11Z,14Z)-eicosatetraenoyl-CoA + cholesterol = cholesteryl (5Z,8Z,11Z,14Z)-eicosatetraenoate + CoA. Functionally, catalyzes the formation of fatty acid-cholesterol esters, which are less soluble in membranes than cholesterol. Plays a role in lipoprotein assembly and dietary cholesterol absorption. Utilizes oleoyl-CoA ((9Z)-octadecenoyl-CoA) and linolenoyl-CoA ((9Z,12Z,15Z)-octadecatrienoyl-CoA) as substrates. May provide cholesteryl esters for lipoprotein secretion from hepatocytes and intestinal mucosa. The chain is Sterol O-acyltransferase 2 from Mus musculus (Mouse).